The chain runs to 476 residues: FAD-dependent monooxygenase ausM (476 aa).

The FAD site is built by Glu41, Gly55, and Arg114. The active site involves Tyr222. 2 residues coordinate FAD: Asp314 and Ala327. Residues 447-467 form a helical membrane-spanning segment; the sequence is LGSTPIHMLTLLLPCLFYFMY.

Belongs to the paxM FAD-dependent monooxygenase family. FAD is required as a cofactor.

It localises to the membrane. It participates in secondary metabolite biosynthesis; terpenoid biosynthesis. In terms of biological role, FAD-dependent monooxygenase; part of the gene cluster A that mediates the biosynthesis of the fungal meroterpenoid acetoxydehydroaustin. The first step of the pathway is the synthesis of 3,5-dimethylorsellinic acid by the polyketide synthase ausA. 3,5-dimethylorsellinic acid is then prenylated by the polyprenyl transferase ausN. Further epoxidation by the FAD-dependent monooxygenase ausM and cyclization by the probable terpene cyclase ausL lead to the formation of protoaustinoid A. Protoaustinoid A is then oxidized to spiro-lactone preaustinoid A3 by the combined action of the FAD-binding monooxygenases ausB and ausC, and the dioxygenase ausE. Acid-catalyzed keto-rearrangement and ring contraction of the tetraketide portion of preaustinoid A3 by ausJ lead to the formation of preaustinoid A4. The aldo-keto reductase ausK, with the help of ausH, is involved in the next step by transforming preaustinoid A4 into isoaustinone which is in turn hydroxylated by the P450 monooxygenase ausI to form austinolide. The cytochrome P450 monooxygenase ausG then modifies austinolide to austinol. Austinol is further acetylated to austin by the O-acetyltransferase ausP, which spontaneously changes to dehydroaustin. The cytochrome P450 monooxygenase then converts dehydroaustin is into 7-dehydrodehydroaustin. The hydroxylation catalyzed by ausR permits the second O-acetyltransferase ausQ to add an additional acetyl group to the molecule, leading to the formation of acetoxydehydroaustin. Due to genetic rearrangements of the clusters and the subsequent loss of some enzymes, the end product of the Penicillium brasilianum austinoid biosynthesis clusters is acetoxydehydroaustin. This Penicillium brasilianum protein is FAD-dependent monooxygenase ausM.